The sequence spans 552 residues: Phosphoribosylaminoimidazole carboxylase (552 aa).

Positions 108–295 constitute an ATP-grasp domain; that stretch reads KQHLQVFKIA…QFEAHLRAIC (188 aa). 134-189 lines the ATP pocket; sequence GQEFGYPFVLKSKTLAYDGRGNYVVHQPSEIPTAIKALGDRPLYVEKFVPFSMEIA.

The protein in the C-terminal section; belongs to the AIR carboxylase family. Class I subfamily.

The catalysed reaction is 5-amino-1-(5-phospho-D-ribosyl)imidazole-4-carboxylate + H(+) = 5-amino-1-(5-phospho-beta-D-ribosyl)imidazole + CO2. It functions in the pathway purine metabolism; IMP biosynthesis via de novo pathway; 5-amino-1-(5-phospho-D-ribosyl)imidazole-4-carboxylate from 5-amino-1-(5-phospho-D-ribosyl)imidazole (carboxylase route): step 1/1. This is Phosphoribosylaminoimidazole carboxylase (ade6) from Schizosaccharomyces pombe (strain 972 / ATCC 24843) (Fission yeast).